The chain runs to 363 residues: NAD(P)H-quinone oxidoreductase subunit 1, chloroplastic (363 aa).

The next 6 membrane-spanning stretches (helical) occupy residues 27-47 (IWLFIPIFTPVSGITIGVLVI), 98-118 (FSIGPSVVVISILLSHLVIPF), 127-147 (LSIGVSLWIAISSIAPIGLLM), 248-268 (YSGIKFGLFYLASYLNLLVSS), 300-320 (VFGTTISIFFTLAKAYLFLFI), and 336-356 (LLNLGWKFLLPIALGNLLLTT).

It belongs to the complex I subunit 1 family. NDH is composed of at least 16 different subunits, 5 of which are encoded in the nucleus.

Its subcellular location is the plastid. It is found in the chloroplast thylakoid membrane. It catalyses the reaction a plastoquinone + NADH + (n+1) H(+)(in) = a plastoquinol + NAD(+) + n H(+)(out). The enzyme catalyses a plastoquinone + NADPH + (n+1) H(+)(in) = a plastoquinol + NADP(+) + n H(+)(out). Its function is as follows. NDH shuttles electrons from NAD(P)H:plastoquinone, via FMN and iron-sulfur (Fe-S) centers, to quinones in the photosynthetic chain and possibly in a chloroplast respiratory chain. The immediate electron acceptor for the enzyme in this species is believed to be plastoquinone. Couples the redox reaction to proton translocation, and thus conserves the redox energy in a proton gradient. The polypeptide is NAD(P)H-quinone oxidoreductase subunit 1, chloroplastic (Amborella trichopoda).